The chain runs to 254 residues: Protein PET122, mitochondrial (254 aa).

A mitochondrion-targeting transit peptide spans 1–8 (MLTITKRL). Residues 185–254 (QAAALALFGR…IKRRGFEINT (70 aa)) form an essential for PET122 function region.

It localises to the mitochondrion inner membrane. In terms of biological role, required for expression of the mitochondrial gene for cytochrome c oxidase subunit 3 (COX3). PET122 seems to work by directly interacting with the small ribosomal subunit to promote translation initiation on the COX3 mRNA. The chain is Protein PET122, mitochondrial (PET122) from Saccharomyces cerevisiae (strain ATCC 204508 / S288c) (Baker's yeast).